The following is a 318-amino-acid chain: NADH-ubiquinone oxidoreductase chain 1 (318 aa).

Helical transmembrane passes span 2 to 22 (FMVNLLMLVIPVMLAMAFLTL), 71 to 91 (YIIAPTLALSIALIMWTPLPI), 98 to 118 (INLGVLFILATSSLAVYSILW), 146 to 166 (LAIILLCILLMSGSFTLSTLI), 171 to 191 (HTWLLLPSWPLAMMWFISTLA), 222 to 242 (LFFMAEYTNIIMMNALTATIF), 253 to 273 (EFFSINFTLKTLLLTTIFLWV), and 294 to 314 (LPLTLAMCMWHTALPIFLANI).

This sequence belongs to the complex I subunit 1 family.

It localises to the mitochondrion inner membrane. The catalysed reaction is a ubiquinone + NADH + 5 H(+)(in) = a ubiquinol + NAD(+) + 4 H(+)(out). Its function is as follows. Core subunit of the mitochondrial membrane respiratory chain NADH dehydrogenase (Complex I) that is believed to belong to the minimal assembly required for catalysis. Complex I functions in the transfer of electrons from NADH to the respiratory chain. The immediate electron acceptor for the enzyme is believed to be ubiquinone. The sequence is that of NADH-ubiquinone oxidoreductase chain 1 (MT-ND1) from Nycticebus coucang (Slow loris).